Consider the following 121-residue polypeptide: Histone H2B (121 aa).

The segment at 1 to 27 (MAPKKAPAAAEKKVKKAPTTEKKNKKK) is disordered. At alanine 2 the chain carries N,N,N-trimethylalanine. N6-acetyllysine occurs at positions 5 and 41. A Glycyl lysine isopeptide (Lys-Gly) (interchain with G-Cter in ubiquitin) cross-link involves residue lysine 115.

Belongs to the histone H2B family. The nucleosome is a histone octamer containing two molecules each of H2A, H2B, H3 and H4 assembled in one H3-H4 heterotetramer and two H2A-H2B heterodimers. The octamer wraps approximately 147 bp of DNA. Post-translationally, monoubiquitination of Lys-115 gives a specific tag for epigenetic transcriptional activation and is also prerequisite for histone H3 'Lys-4' and 'Lys-79' methylation. In terms of processing, acetylation occurs almost exclusively in the MAC.

The protein resides in the nucleus. Its subcellular location is the chromosome. Core component of nucleosome. Nucleosomes wrap and compact DNA into chromatin, limiting DNA accessibility to the cellular machineries which require DNA as a template. Histones thereby play a central role in transcription regulation, DNA repair, DNA replication and chromosomal stability. DNA accessibility is regulated via a complex set of post-translational modifications of histones, also called histone code, and nucleosome remodeling. This is Histone H2B from Tetrahymena pyriformis.